Here is a 582-residue protein sequence, read N- to C-terminus: Frizzled-10 (582 aa).

An N-terminal signal peptide occupies residues 1-21 (MQHPGPRLWLVLQVMIGSCTA). The Extracellular segment spans residues 22-226 (ISSMDLERPG…DVYWSRDDKR (205 aa)). The FZ domain occupies 30 to 151 (PGDGKCQPVE…NDPNYLCMEA (122 aa)). Intrachain disulfides connect cysteine 35/cysteine 96, cysteine 43/cysteine 89, cysteine 80/cysteine 118, cysteine 107/cysteine 148, and cysteine 111/cysteine 135. The N-linked (GlcNAc...) asparagine glycan is linked to asparagine 49. The tract at residues 153-189 (NNGSDEPSRGSGMFPPLFRPQRPHSAQEHPLKDGGPG) is disordered. Asparagine 154 is a glycosylation site (N-linked (GlcNAc...) asparagine). Residues 227 to 247 (FAVVWLAIWSVLCFFSSAFTV) traverse the membrane as a helical segment. The Cytoplasmic segment spans residues 248–263 (LTFLIDPSRFRYPERP). The helical transmembrane segment at 264 to 284 (IIFLSMCYCVYSVGYIIRLFA) threads the bilayer. The Extracellular portion of the chain corresponds to 285–312 (GAESIACDRDSGQLYVIQEGLESTGCTL). The helical transmembrane segment at 313–333 (VFLVLYYFGMASSLWWVVLTL) threads the bilayer. Over 334–352 (TWFLAAGKKWGHEAIEANS) the chain is Cytoplasmic. Residues 353–373 (SYFHLAAWAIPAVKTILILVM) traverse the membrane as a helical segment. Over 374 to 394 (RRVAGDELTGVCYVGSMDVNA) the chain is Extracellular. The chain crosses the membrane as a helical span at residues 395 to 415 (LTGFVLVPLACYLVIGTSFIL). Residues 416-444 (SGFVALFHIRRVMKTGGENTDKLEKLMVR) are Cytoplasmic-facing. Residues 445-465 (IGVFSLLYTVPATCVIACYFY) form a helical membrane-spanning segment. Residues 466-503 (ERLNMDYWKMLATQHKCKMNNQTKTPDCLMTTSIPAVE) lie on the Extracellular side of the membrane. The N-linked (GlcNAc...) asparagine glycan is linked to asparagine 486. The chain crosses the membrane as a helical span at residues 504 to 524 (VFMVKVSMLLVVGITSGVWVW). Over 525–582 (TSKTLQSWQHVCSRGLKRKSRRKPASVVTSAGIYKKAQHPQKPHLGKYELPAQPSACV) the chain is Cytoplasmic. A Lys-Thr-X-X-X-Trp motif, mediates interaction with the PDZ domain of Dvl family members motif is present at residues 527-532 (KTLQSW). The tract at residues 561–582 (AQHPQKPHLGKYELPAQPSACV) is disordered. The PDZ-binding motif lies at 580 to 582 (ACV).

The protein belongs to the G-protein coupled receptor Fz/Smo family. In terms of assembly, interacts with MYOC. Interacts with WNT7B. In terms of processing, ubiquitinated by ZNRF3, leading to its degradation by the proteasome.

The protein resides in the cell membrane. In terms of biological role, receptor for Wnt proteins. Functions in the canonical Wnt/beta-catenin signaling pathway. The canonical Wnt/beta-catenin signaling pathway leads to the activation of disheveled proteins, inhibition of GSK-3 kinase, nuclear accumulation of beta-catenin and activation of Wnt target genes. A second signaling pathway involving PKC and calcium fluxes has been seen for some family members, but it is not yet clear if it represents a distinct pathway or if it can be integrated in the canonical pathway, as PKC seems to be required for Wnt-mediated inactivation of GSK-3 kinase. Both pathways seem to involve interactions with G-proteins. May be involved in transduction and intercellular transmission of polarity information during tissue morphogenesis and/or in differentiated tissues. In Mus musculus (Mouse), this protein is Frizzled-10 (Fzd10).